Reading from the N-terminus, the 89-residue chain is Small ribosomal subunit protein uS15 (89 aa).

It belongs to the universal ribosomal protein uS15 family. In terms of assembly, part of the 30S ribosomal subunit. Forms a bridge to the 50S subunit in the 70S ribosome, contacting the 23S rRNA.

Its function is as follows. One of the primary rRNA binding proteins, it binds directly to 16S rRNA where it helps nucleate assembly of the platform of the 30S subunit by binding and bridging several RNA helices of the 16S rRNA. Forms an intersubunit bridge (bridge B4) with the 23S rRNA of the 50S subunit in the ribosome. The protein is Small ribosomal subunit protein uS15 of Geobacillus sp. (strain WCH70).